We begin with the raw amino-acid sequence, 159 residues long: Large ribosomal subunit protein uL10 (159 aa).

It belongs to the universal ribosomal protein uL10 family. Part of the ribosomal stalk of the 50S ribosomal subunit. The N-terminus interacts with L11 and the large rRNA to form the base of the stalk. The C-terminus forms an elongated spine to which L12 dimers bind in a sequential fashion forming a multimeric L10(L12)X complex.

Forms part of the ribosomal stalk, playing a central role in the interaction of the ribosome with GTP-bound translation factors. The polypeptide is Large ribosomal subunit protein uL10 (Sulfurimonas denitrificans (strain ATCC 33889 / DSM 1251) (Thiomicrospira denitrificans (strain ATCC 33889 / DSM 1251))).